A 235-amino-acid polypeptide reads, in one-letter code: Exosome complex component Rrp4 (235 aa).

The region spanning 67-139 (GDVVIGLIQS…KTRSPLLTVQ (73 aa)) is the S1 motif domain. In terms of domain architecture, KH spans 149 to 205 (GKIVEISPAKVPRVIGRKMSMLKTLEEKTECKIFVARNGRIHLECPNEDLEAIAVMA).

Belongs to the RRP4 family. As to quaternary structure, component of the archaeal exosome complex. Forms a trimer of Rrp4 and/or Csl4 subunits. The trimer associates with a hexameric ring-like arrangement composed of 3 Rrp41-Rrp42 heterodimers.

The protein localises to the cytoplasm. Functionally, non-catalytic component of the exosome, which is a complex involved in RNA degradation. Increases the RNA binding and the efficiency of RNA degradation. Confers strong poly(A) specificity to the exosome. In Aeropyrum pernix (strain ATCC 700893 / DSM 11879 / JCM 9820 / NBRC 100138 / K1), this protein is Exosome complex component Rrp4.